A 299-amino-acid polypeptide reads, in one-letter code: ATP phosphoribosyltransferase (299 aa).

Belongs to the ATP phosphoribosyltransferase family. Long subfamily. The cofactor is Mg(2+).

The protein localises to the cytoplasm. The catalysed reaction is 1-(5-phospho-beta-D-ribosyl)-ATP + diphosphate = 5-phospho-alpha-D-ribose 1-diphosphate + ATP. It functions in the pathway amino-acid biosynthesis; L-histidine biosynthesis; L-histidine from 5-phospho-alpha-D-ribose 1-diphosphate: step 1/9. Its activity is regulated as follows. Feedback inhibited by histidine. Its function is as follows. Catalyzes the condensation of ATP and 5-phosphoribose 1-diphosphate to form N'-(5'-phosphoribosyl)-ATP (PR-ATP). Has a crucial role in the pathway because the rate of histidine biosynthesis seems to be controlled primarily by regulation of HisG enzymatic activity. In Shewanella denitrificans (strain OS217 / ATCC BAA-1090 / DSM 15013), this protein is ATP phosphoribosyltransferase.